We begin with the raw amino-acid sequence, 1058 residues long: Isoleucine--tRNA ligase (1058 aa).

Positions proline 48–threonine 58 match the 'HIGH' region motif. The short motif at lysine 596 to serine 600 is the 'KMSKS' region element. Lysine 599 is a binding site for ATP.

The protein belongs to the class-I aminoacyl-tRNA synthetase family. IleS type 2 subfamily. Monomer. Requires Zn(2+) as cofactor.

It localises to the cytoplasm. The catalysed reaction is tRNA(Ile) + L-isoleucine + ATP = L-isoleucyl-tRNA(Ile) + AMP + diphosphate. Catalyzes the attachment of isoleucine to tRNA(Ile). As IleRS can inadvertently accommodate and process structurally similar amino acids such as valine, to avoid such errors it has two additional distinct tRNA(Ile)-dependent editing activities. One activity is designated as 'pretransfer' editing and involves the hydrolysis of activated Val-AMP. The other activity is designated 'posttransfer' editing and involves deacylation of mischarged Val-tRNA(Ile). This chain is Isoleucine--tRNA ligase, found in Methanosarcina acetivorans (strain ATCC 35395 / DSM 2834 / JCM 12185 / C2A).